The sequence spans 351 residues: MKVIKTRNVQQALPEALYQLSFEGVRRDSRNGPVFMFPEPVTTVYLRPAERVLFWAERDANPFFHLMESLWMLGGRNDVEYVARFVDRMRSYSDDGLTFHGAYGFRWRQHFFEDQLPKIIAALKENRDDRRQVLSMWDADADLGRQGKDLPCNLQAIFQIACDGRLDMTVTNRSNDLIWGAYGANAVHFSYLHEYVARSVGVEQGIYRQVSANFHAYEEVLNKVAPLADLAANPMTGTETPDPYAAGIAEPYPLMSTDPEEWNQELMMFLSEPDAVGFRDPFFRRVAIPMMKAHKAFKQTSNPSRFDAALAELDNVAATDWKLAGVEWIERRRAAFEARKARAMDDGVAYE.

It belongs to the thymidylate synthase family.

It carries out the reaction dUMP + (6R)-5,10-methylene-5,6,7,8-tetrahydrofolate + H2O = 5-hydroxymethyl-dUMP + (6S)-5,6,7,8-tetrahydrofolate. In terms of biological role, catalyzes formation of 5-hydroxymethyldeoxyuridylate (5HMdUMP) as a step in the pathway that replaces dTMP by thymidine hypermodifications in the viral genome. As a final result of the pathway of hypermodification, 5-aminoethyl-2'-deoxyuridine (5-NedU) substitutes for about 30% of thymidines in the viral DNA. These modifications probably prevent degradation of viral genome by the host restriction-modification antiviral defense system. This chain is Deoxyuridylate hydroxymethyltransferase, found in Pseudomonas aeruginosa.